The following is a 1266-amino-acid chain: Rho GTPase-activating protein 29 (1266 aa).

Ser-166, Ser-171, Ser-174, and Ser-185 each carry phosphoserine. The F-BAR domain occupies 187-457 (IELDNLLLKN…SAKLYDPGQE (271 aa)). Residues 291 to 413 (RKNEMEKQRK…EILTQLRTLV (123 aa)) adopt a coiled-coil conformation. Residues Ser-496, Ser-516, and Ser-549 each carry the phosphoserine modification. Residues 538–556 (SESTGGSSESRSLDSESIS) are compositionally biased toward low complexity. Residues 538-596 (SESTGGSSESRSLDSESISPGDFHRKLPRTPSSGTMSSADDLDEREPPSPSEAGPNSLG) are disordered. The Phorbol-ester/DAG-type zinc finger occupies 609–654 (THKFRKLRSPTKCRDCEGIVMFPGVECEECLLVCHRKCLENLVIVC). One can recognise a Rho-GAP domain in the interval 668–883 (AEFIQVAKKE…FLITYAQKIF (216 aa)). Residues Ser-915, Ser-951, and Ser-1023 each carry the phosphoserine modification. 3 disordered regions span residues 1033–1054 (AGSP…KFGK), 1114–1153 (VSTG…DSCP), and 1222–1248 (VQTS…QRPR). Polar residues predominate over residues 1115–1127 (STGNNRGHSSGAA). The span at 1132 to 1148 (AHADPARSARDTSEHSS) shows a compositional bias: basic and acidic residues. Residues Ser-1149 and Ser-1151 each carry the phosphoserine modification. An interaction with PTPN13/PTPL1 region spans residues 1263–1266 (PQFV).

Interacts with PTPN13/PTPL1. Interacts with RAP2A via its coiled coil domain. Interacts with RASIP1.

Its function is as follows. GTPase activator for the Rho-type GTPases by converting them to an inactive GDP-bound state. Has strong activity toward RHOA, and weaker activity toward RAC1 and CDC42. May act as a specific effector of RAP2A to regulate Rho. In concert with RASIP1, suppresses RhoA signaling and dampens ROCK and MYH9 activities in endothelial cells and plays an essential role in blood vessel tubulogenesis. The protein is Rho GTPase-activating protein 29 (Arhgap29) of Rattus norvegicus (Rat).